The following is a 297-amino-acid chain: Aspartate carbamoyltransferase catalytic subunit (297 aa).

The carbamoyl phosphate site is built by Arg52 and Thr53. Lys80 serves as a coordination point for L-aspartate. Residues Arg102, His130, and Gln133 each contribute to the carbamoyl phosphate site. Residues Arg167 and Arg217 each contribute to the L-aspartate site. Residues Gly256 and Pro257 each coordinate carbamoyl phosphate.

It belongs to the aspartate/ornithine carbamoyltransferase superfamily. ATCase family. As to quaternary structure, heterododecamer (2C3:3R2) of six catalytic PyrB chains organized as two trimers (C3), and six regulatory PyrI chains organized as three dimers (R2).

The enzyme catalyses carbamoyl phosphate + L-aspartate = N-carbamoyl-L-aspartate + phosphate + H(+). It participates in pyrimidine metabolism; UMP biosynthesis via de novo pathway; (S)-dihydroorotate from bicarbonate: step 2/3. Functionally, catalyzes the condensation of carbamoyl phosphate and aspartate to form carbamoyl aspartate and inorganic phosphate, the committed step in the de novo pyrimidine nucleotide biosynthesis pathway. In Helicobacter hepaticus (strain ATCC 51449 / 3B1), this protein is Aspartate carbamoyltransferase catalytic subunit.